A 118-amino-acid chain; its full sequence is Small ribosomal subunit protein mS37 (118 aa).

A CHCH domain is found at 42–84 (EATCITEMSMMMACWKQNEFRDEACRKEIQDFFDCSSRAQEAR). Short sequence motifs (cx9C motif) lie at residues 45–55 (CITEMSMMMAC) and 66–76 (CRKEIQDFFDC). Intrachain disulfides connect Cys45-Cys76 and Cys55-Cys66. A disordered region spans residues 86–105 (MRSIQESLGQSESLSPHKMT). Positions 89–99 (IQESLGQSESL) are enriched in polar residues.

This sequence belongs to the mitochondrion-specific ribosomal protein mS37 family. As to quaternary structure, component of the mitochondrial ribosome small subunit (28S) which comprises a 12S rRNA and about 30 distinct proteins.

It localises to the mitochondrion. The protein resides in the nucleus. The chain is Small ribosomal subunit protein mS37 (Chchd1) from Mus musculus (Mouse).